Consider the following 299-residue polypeptide: Probable lipid kinase YegS (299 aa).

Residues 2–133 (AEFPASLLIL…IDMAQVNKQT (132 aa)) enclose the DAGKc domain. ATP is bound by residues T40, 66 to 72 (GDGTINE), and T95. Mg(2+) is bound by residues L215, D218, and L220. The active-site Proton acceptor is the E271.

This sequence belongs to the diacylglycerol/lipid kinase family. YegS lipid kinase subfamily. Mg(2+) is required as a cofactor. It depends on Ca(2+) as a cofactor.

It localises to the cytoplasm. Its function is as follows. Probably phosphorylates lipids; the in vivo substrate is unknown. The protein is Probable lipid kinase YegS of Escherichia coli O6:K15:H31 (strain 536 / UPEC).